Here is a 1251-residue protein sequence, read N- to C-terminus: Phospholipid-transporting ATPase IC (1251 aa).

The segment at 1–54 (MSTERDSETTFDEDSQPNDEVVPYSDDETEDELDDQGSAVEPEQNRVNREAEEN) is disordered. At 1–108 (MSTERDSETT…TYKYNAFTFI (108 aa)) the chain is on the cytoplasmic side. Positions 25-35 (SDDETEDELDD) are enriched in acidic residues. Positions 43–54 (EQNRVNREAEEN) are enriched in basic and acidic residues. Residues 109–130 (PMNLFEQFKRAANLYFLALLIL) form a helical membrane-spanning segment. Residues 131-136 (QAVPQI) lie on the Exoplasmic loop side of the membrane. A helical transmembrane segment spans residues 137–156 (STLAWYTTLVPLLVVLGVTA). Topologically, residues 157 to 340 (IKDLVDDVAR…TKIDYLMNYM (184 aa)) are cytoplasmic. A helical transmembrane segment spans residues 341 to 362 (VYTIFVVLILLSAGLAIGHAYW). Over 363-389 (EAQVGNSSWYLYDGEDDTPSYRGFLIF) the chain is Exoplasmic loop. A helical membrane pass occupies residues 390–411 (WGYIIVLNTMVPISLYVSVEVI). Residues 412 to 949 (RLGQSHFINW…GRWSYIRMCK (538 aa)) lie on the Cytoplasmic side of the membrane. The 4-aspartylphosphate intermediate role is filled by Asp-454. The ATP site is built by Asp-454, Lys-455, Thr-456, Glu-555, Phe-596, Lys-619, Arg-652, Thr-732, Gly-733, Asp-734, Arg-867, and Lys-873. Asp-454 contributes to the Mg(2+) binding site. Mg(2+) is bound at residue Thr-456. Mg(2+) is bound at residue Asp-893. Residues Asn-896 and Asp-897 each contribute to the ATP site. Residue Asp-897 participates in Mg(2+) binding. The helical transmembrane segment at 950-970 (FLRYFFYKNFAFTLVHFWYSF) threads the bilayer. At 971 to 982 (FNGYSAQTAYED) the chain is on the exoplasmic loop side. A helical membrane pass occupies residues 983 to 1002 (WFITLYNVLYTSLPVLLMGL). At 1003 to 1032 (LDQDVSDKLSLRFPGLYIVGQRDLLFNYKR) the chain is on the cytoplasmic side. A helical membrane pass occupies residues 1033-1054 (FFVSLLHGVLTSMILFFIPLGA). At 1055 to 1068 (YLQTVGQDGEAPSD) the chain is on the exoplasmic loop side. Residues 1069 to 1091 (YQSFAVTIASALVITVNFQIGLD) form a helical membrane-spanning segment. At 1092–1097 (TSYWTF) the chain is on the cytoplasmic side. Residues 1098–1118 (VNAFSIFGSIALYFGIMFDFH) form a helical membrane-spanning segment. Topologically, residues 1119 to 1138 (SAGIHVLFPSAFQFTGTASN) are exoplasmic loop. A helical membrane pass occupies residues 1139–1163 (ALRQPYIWLTIILAVAVCLLPVVAI). Over 1164-1251 (RFLSMTIWPS…TAEYRRTGDS (88 aa)) the chain is Cytoplasmic. Ser-1223 carries the post-translational modification Phosphoserine.

Belongs to the cation transport ATPase (P-type) (TC 3.A.3) family. Type IV subfamily. In terms of assembly, component of a P4-ATPase flippase complex which consists of a catalytic alpha subunit ATP8B1 and an accessory beta subunit TMEM30A. The flippase ATP8B1:TMEM30A complex can form an intermediate phosphoenzyme in vitro. Also interacts with beta subunit TMEM30B. Requires Mg(2+) as cofactor. As to expression, found in most tissues except brain and skeletal muscle. Most abundant in pancreas and small intestine.

It localises to the cell membrane. Its subcellular location is the apical cell membrane. The protein resides in the cell projection. It is found in the stereocilium. The protein localises to the endoplasmic reticulum. It localises to the golgi apparatus. It catalyses the reaction ATP + H2O + phospholipidSide 1 = ADP + phosphate + phospholipidSide 2.. It carries out the reaction a 1,2-diacyl-sn-glycero-3-phosphocholine(out) + ATP + H2O = a 1,2-diacyl-sn-glycero-3-phosphocholine(in) + ADP + phosphate + H(+). The enzyme catalyses a 1,2-diacyl-sn-glycero-3-phospho-L-serine(out) + ATP + H2O = a 1,2-diacyl-sn-glycero-3-phospho-L-serine(in) + ADP + phosphate + H(+). Catalytic component of a P4-ATPase flippase complex which catalyzes the hydrolysis of ATP coupled to the transport of phospholipids, in particular phosphatidylcholines (PC), from the outer to the inner leaflet of the plasma membrane. May participate in the establishment of the canalicular membrane integrity by ensuring asymmetric distribution of phospholipids in the canicular membrane. Thus may have a role in the regulation of bile acids transport into the canaliculus, uptake of bile acids from intestinal contents into intestinal mucosa or both and protect hepatocytes from bile salts. Involved in the microvillus formation in polarized epithelial cells; the function seems to be independent from its flippase activity. Participates in correct apical membrane localization of CDC42, CFTR and SLC10A2. Enables CDC42 clustering at the apical membrane during enterocyte polarization through the interaction between CDC42 polybasic region and negatively charged membrane lipids provided by ATP8B1. Together with TMEM30A is involved in uptake of the synthetic drug alkylphospholipid perifosine. Required for the preservation of cochlear hair cells in the inner ear. May act as cardiolipin transporter during inflammatory injury. This Homo sapiens (Human) protein is Phospholipid-transporting ATPase IC.